A 537-amino-acid polypeptide reads, in one-letter code: uncharacterized protein (537 aa).

The protein belongs to the RuBisCO large chain family. Type IV subfamily.

Unknown. Probably does not have RuBisCO activity. This is an uncharacterized protein from Symbiodinium sp. (Dinoflagellate).